Here is a 307-residue protein sequence, read N- to C-terminus: 3-ketodihydrosphingosine reductase TSC10 (307 aa).

Leucine 11 is a binding site for NADP(+). 3 residues coordinate NADPH: glycine 14, serine 16, and glycine 18. The GXSXG signature appears at 14–18 (GGSQG). An NADP(+)-binding site is contributed by leucine 19. Positions 40, 44, and 74 each coordinate NADPH. Serine 147 serves as the catalytic Proton donor. The NADP(+) site is built by tyrosine 161, lysine 165, and serine 194. Catalysis depends on tyrosine 161, which acts as the Proton acceptor. The active-site Lowers pKa of active site Tyr is lysine 165. The chain crosses the membrane as a helical span at residues 261–281 (YFLWPLGWLLGALVNLLVVPI).

It belongs to the short-chain dehydrogenases/reductases (SDR) family.

The protein resides in the endoplasmic reticulum membrane. The enzyme catalyses sphinganine + NADP(+) = 3-oxosphinganine + NADPH + H(+). It participates in lipid metabolism; sphingolipid metabolism. Functionally, catalyzes the reduction of 3'-oxosphinganine (3-ketodihydrosphingosine/KDS) to sphinganine (dihydrosphingosine/DHS), the second step of de novo sphingolipid biosynthesis. In Eremothecium gossypii (strain ATCC 10895 / CBS 109.51 / FGSC 9923 / NRRL Y-1056) (Yeast), this protein is 3-ketodihydrosphingosine reductase TSC10 (TSC10).